Consider the following 325-residue polypeptide: tRNA dimethylallyltransferase (325 aa).

G11–S18 provides a ligand contact to ATP. T13–S18 is a binding site for substrate. Interaction with substrate tRNA regions lie at residues D36 to Q39 and Q160 to R164.

This sequence belongs to the IPP transferase family. As to quaternary structure, monomer. Requires Mg(2+) as cofactor.

It carries out the reaction adenosine(37) in tRNA + dimethylallyl diphosphate = N(6)-dimethylallyladenosine(37) in tRNA + diphosphate. In terms of biological role, catalyzes the transfer of a dimethylallyl group onto the adenine at position 37 in tRNAs that read codons beginning with uridine, leading to the formation of N6-(dimethylallyl)adenosine (i(6)A). The polypeptide is tRNA dimethylallyltransferase (Rickettsia canadensis (strain McKiel)).